Reading from the N-terminus, the 314-residue chain is Ribonuclease Z (314 aa).

Zn(2+) is bound by residues histidine 63, histidine 65, aspartate 67, histidine 68, histidine 142, aspartate 205, and histidine 263. Aspartate 67 serves as the catalytic Proton acceptor.

The protein belongs to the RNase Z family. Homodimer. The cofactor is Zn(2+).

The catalysed reaction is Endonucleolytic cleavage of RNA, removing extra 3' nucleotides from tRNA precursor, generating 3' termini of tRNAs. A 3'-hydroxy group is left at the tRNA terminus and a 5'-phosphoryl group is left at the trailer molecule.. In terms of biological role, zinc phosphodiesterase, which displays some tRNA 3'-processing endonuclease activity. Probably involved in tRNA maturation, by removing a 3'-trailer from precursor tRNA. The protein is Ribonuclease Z of Kineococcus radiotolerans (strain ATCC BAA-149 / DSM 14245 / SRS30216).